The primary structure comprises 406 residues: Formate-dependent phosphoribosylglycinamide formyltransferase (406 aa).

N(1)-(5-phospho-beta-D-ribosyl)glycinamide-binding positions include glutamate 27–leucine 28 and glutamate 87. ATP-binding positions include arginine 120, lysine 162, serine 167 to glutamine 172, glutamate 202 to isoleucine 205, and glutamate 210. The ATP-grasp domain occupies arginine 125–leucine 320. Mg(2+)-binding residues include glutamate 279 and glutamate 291. Residues aspartate 298, lysine 367, and arginine 374–arginine 375 contribute to the N(1)-(5-phospho-beta-D-ribosyl)glycinamide site.

The protein belongs to the PurK/PurT family. In terms of assembly, homodimer.

It catalyses the reaction N(1)-(5-phospho-beta-D-ribosyl)glycinamide + formate + ATP = N(2)-formyl-N(1)-(5-phospho-beta-D-ribosyl)glycinamide + ADP + phosphate + H(+). The protein operates within purine metabolism; IMP biosynthesis via de novo pathway; N(2)-formyl-N(1)-(5-phospho-D-ribosyl)glycinamide from N(1)-(5-phospho-D-ribosyl)glycinamide (formate route): step 1/1. In terms of biological role, involved in the de novo purine biosynthesis. Catalyzes the transfer of formate to 5-phospho-ribosyl-glycinamide (GAR), producing 5-phospho-ribosyl-N-formylglycinamide (FGAR). Formate is provided by PurU via hydrolysis of 10-formyl-tetrahydrofolate. In Bordetella bronchiseptica (strain ATCC BAA-588 / NCTC 13252 / RB50) (Alcaligenes bronchisepticus), this protein is Formate-dependent phosphoribosylglycinamide formyltransferase.